Here is a 177-residue protein sequence, read N- to C-terminus: Large ribosomal subunit protein uL6 (177 aa).

Belongs to the universal ribosomal protein uL6 family. Part of the 50S ribosomal subunit.

Functionally, this protein binds to the 23S rRNA, and is important in its secondary structure. It is located near the subunit interface in the base of the L7/L12 stalk, and near the tRNA binding site of the peptidyltransferase center. This Cereibacter sphaeroides (strain ATCC 17025 / ATH 2.4.3) (Rhodobacter sphaeroides) protein is Large ribosomal subunit protein uL6.